The sequence spans 450 residues: FERM domain-containing protein 8 (450 aa).

In terms of domain architecture, FERM spans 28 to 373 (MDVIVYLIND…YCIELSQTTE (346 aa)).

It localises to the cytoplasm. The protein resides in the cytosol. The protein localises to the cell membrane. Functionally, promotes the cell surface stability of RHBDF1 and RHBDF2 and prevents their degradation via the endolysosomal pathway. By acting on RHBDF proteins, involved in ADAM17-mediated ligand shedding. May negatively regulate Wnt signaling. This Xenopus tropicalis (Western clawed frog) protein is FERM domain-containing protein 8 (frmd8).